Here is an 804-residue protein sequence, read N- to C-terminus: DEP domain-containing protein 1A (804 aa).

The region spanning 24–108 is the DEP domain; the sequence is FRVGMPLRKH…DNNQLFRFPA (85 aa). Residues 282–322 enclose the Rho-GAP domain; sequence DYFLNLPEPLLTFEYYELFVNILVVCGYITVSDRTSGIHKI. Ser-513 carries the phosphoserine modification. Positions 592–647 are interaction with ZNF224; it reads AINALQLCCLLLPPPNRRKLQLLMRMISRMSQNVDMPKLHEQIGTRSLMINTFSRC. Positions 726 to 760 form a coiled coil; it reads EQKISTSQAAIAELLENIVRSKSLSLKEKRRKLKQ.

As to quaternary structure, can form dimers. Interacts with ZNF224.

It localises to the nucleus. In terms of biological role, may be involved in transcriptional regulation as a transcriptional corepressor. The DEPDC1A-ZNF224 complex may play a critical role in bladder carcinogenesis by repressing the transcription of the A20 gene, leading to transport of NF-KB protein into the nucleus, resulting in suppression of apoptosis of bladder cancer cells. This Mus musculus (Mouse) protein is DEP domain-containing protein 1A (Depdc1a).